Consider the following 281-residue polypeptide: Sulfur carrier protein FdhD (281 aa).

The Cysteine persulfide intermediate role is filled by Cys117.

This sequence belongs to the FdhD family.

It is found in the cytoplasm. In terms of biological role, required for formate dehydrogenase (FDH) activity. Acts as a sulfur carrier protein that transfers sulfur from IscS to the molybdenum cofactor prior to its insertion into FDH. In Xanthomonas oryzae pv. oryzae (strain MAFF 311018), this protein is Sulfur carrier protein FdhD.